We begin with the raw amino-acid sequence, 197 residues long: 7-methyl-GTP pyrophosphatase (197 aa).

The active-site Proton acceptor is the Asp-72.

This sequence belongs to the Maf family. YceF subfamily. The cofactor is a divalent metal cation.

It localises to the cytoplasm. The catalysed reaction is N(7)-methyl-GTP + H2O = N(7)-methyl-GMP + diphosphate + H(+). Its function is as follows. Nucleoside triphosphate pyrophosphatase that hydrolyzes 7-methyl-GTP (m(7)GTP). May have a dual role in cell division arrest and in preventing the incorporation of modified nucleotides into cellular nucleic acids. The sequence is that of 7-methyl-GTP pyrophosphatase from Bordetella avium (strain 197N).